Reading from the N-terminus, the 214-residue chain is N-(5'-phosphoribosyl)anthranilate isomerase (214 aa).

Belongs to the TrpF family.

It catalyses the reaction N-(5-phospho-beta-D-ribosyl)anthranilate = 1-(2-carboxyphenylamino)-1-deoxy-D-ribulose 5-phosphate. Its pathway is amino-acid biosynthesis; L-tryptophan biosynthesis; L-tryptophan from chorismate: step 3/5. This Rhodospirillum centenum (strain ATCC 51521 / SW) protein is N-(5'-phosphoribosyl)anthranilate isomerase.